A 333-amino-acid chain; its full sequence is Ketol-acid reductoisomerase (NADP(+)) (333 aa).

Residues 1–179 enclose the KARI N-terminal Rossmann domain; it reads MFYDDDADLS…GGTRAGVIKT (179 aa). NADP(+)-binding positions include 22-25, Lys-45, Ser-48, Ser-50, and 80-83; these read YGSQ and DTAQ. Residue His-105 is part of the active site. Gly-131 lines the NADP(+) pocket. Residues 180–325 enclose the KARI C-terminal knotted domain; that stretch reads TFKDETETDL…KKLRDLMSWV (146 aa). Asp-188, Glu-192, Glu-224, and Glu-228 together coordinate Mg(2+). Ser-249 contributes to the substrate binding site.

Belongs to the ketol-acid reductoisomerase family. The cofactor is Mg(2+).

It carries out the reaction (2R)-2,3-dihydroxy-3-methylbutanoate + NADP(+) = (2S)-2-acetolactate + NADPH + H(+). The catalysed reaction is (2R,3R)-2,3-dihydroxy-3-methylpentanoate + NADP(+) = (S)-2-ethyl-2-hydroxy-3-oxobutanoate + NADPH + H(+). It functions in the pathway amino-acid biosynthesis; L-isoleucine biosynthesis; L-isoleucine from 2-oxobutanoate: step 2/4. It participates in amino-acid biosynthesis; L-valine biosynthesis; L-valine from pyruvate: step 2/4. In terms of biological role, involved in the biosynthesis of branched-chain amino acids (BCAA). Catalyzes an alkyl-migration followed by a ketol-acid reduction of (S)-2-acetolactate (S2AL) to yield (R)-2,3-dihydroxy-isovalerate. In the isomerase reaction, S2AL is rearranged via a Mg-dependent methyl migration to produce 3-hydroxy-3-methyl-2-ketobutyrate (HMKB). In the reductase reaction, this 2-ketoacid undergoes a metal-dependent reduction by NADPH to yield (R)-2,3-dihydroxy-isovalerate. The polypeptide is Ketol-acid reductoisomerase (NADP(+)) (Mycobacterium bovis (strain ATCC BAA-935 / AF2122/97)).